Here is a 72-residue protein sequence, read N- to C-terminus: Translation initiation factor IF-1 (72 aa).

An S1-like domain is found at 1–72 (MAKEDVIEMQ…SKGRIVFRAR (72 aa)).

This sequence belongs to the IF-1 family. Component of the 30S ribosomal translation pre-initiation complex which assembles on the 30S ribosome in the order IF-2 and IF-3, IF-1 and N-formylmethionyl-tRNA(fMet); mRNA recruitment can occur at any time during PIC assembly.

It localises to the cytoplasm. Functionally, one of the essential components for the initiation of protein synthesis. Stabilizes the binding of IF-2 and IF-3 on the 30S subunit to which N-formylmethionyl-tRNA(fMet) subsequently binds. Helps modulate mRNA selection, yielding the 30S pre-initiation complex (PIC). Upon addition of the 50S ribosomal subunit IF-1, IF-2 and IF-3 are released leaving the mature 70S translation initiation complex. The protein is Translation initiation factor IF-1 of Photobacterium profundum (strain SS9).